The primary structure comprises 254 residues: Glutathione S-transferase F14 (254 aa).

Residues 4-85 enclose the GST N-terminal domain; it reads SKMKLHCGFI…YLAEQYKDVG (82 aa). Residues 42-43, 56-57, and 69-70 contribute to the glutathione site; these read AK, EV, and EP. The GST C-terminal domain occupies 92–231; sequence DPKKRAIMSM…DLMKQRRLPI (140 aa).

Belongs to the GST superfamily. Phi family.

It localises to the cytoplasm. Its subcellular location is the cytosol. The enzyme catalyses RX + glutathione = an S-substituted glutathione + a halide anion + H(+). Its function is as follows. May be involved in the conjugation of reduced glutathione to a wide number of exogenous and endogenous hydrophobic electrophiles and have a detoxification role against certain herbicides. In Arabidopsis thaliana (Mouse-ear cress), this protein is Glutathione S-transferase F14.